The chain runs to 1029 residues: Carbamoyl phosphate synthase large chain (1029 aa).

Positions 1-402 (MPKRTDLQTI…SLQKALRSTE (402 aa)) are carboxyphosphate synthetic domain. ATP contacts are provided by Arg129, Arg169, Gly175, Gly176, Glu208, Ile210, Glu215, Gly241, Val242, His243, Gln285, and Glu299. The region spanning 133–328 (QAAMKKIGVE…IAKIAALLAV (196 aa)) is the ATP-grasp 1 domain. The Mg(2+) site is built by Gln285, Glu299, and Asn301. Mn(2+) contacts are provided by Gln285, Glu299, and Asn301. The interval 403-546 (SDVRGAFAEM…YSTYEWEDEV (144 aa)) is oligomerization domain. Positions 547–929 (TPTDKPKVVI…AYYRAELGAK (383 aa)) are carbamoyl phosphate synthetic domain. Residues 671-863 (NALCERLGLP…LAKYAARIAV (193 aa)) form the ATP-grasp 2 domain. Positions 707, 747, 749, 754, 779, 780, 781, 782, 822, and 834 each coordinate ATP. Mg(2+)-binding residues include Gln822, Glu834, and Asn836. Positions 822, 834, and 836 each coordinate Mn(2+). The MGS-like domain occupies 930-1028 (SNLPLSGTAL…QAWQQREAAA (99 aa)). Residues 930-1029 (SNLPLSGTAL…AWQQREAAAS (100 aa)) form an allosteric domain region.

The protein belongs to the CarB family. Composed of two chains; the small (or glutamine) chain promotes the hydrolysis of glutamine to ammonia, which is used by the large (or ammonia) chain to synthesize carbamoyl phosphate. Tetramer of heterodimers (alpha,beta)4. Mg(2+) is required as a cofactor. Requires Mn(2+) as cofactor.

It catalyses the reaction hydrogencarbonate + L-glutamine + 2 ATP + H2O = carbamoyl phosphate + L-glutamate + 2 ADP + phosphate + 2 H(+). The enzyme catalyses hydrogencarbonate + NH4(+) + 2 ATP = carbamoyl phosphate + 2 ADP + phosphate + 2 H(+). The protein operates within amino-acid biosynthesis; L-arginine biosynthesis; carbamoyl phosphate from bicarbonate: step 1/1. It functions in the pathway pyrimidine metabolism; UMP biosynthesis via de novo pathway; (S)-dihydroorotate from bicarbonate: step 1/3. Functionally, large subunit of the glutamine-dependent carbamoyl phosphate synthetase (CPSase). CPSase catalyzes the formation of carbamoyl phosphate from the ammonia moiety of glutamine, carbonate, and phosphate donated by ATP, constituting the first step of 2 biosynthetic pathways, one leading to arginine and/or urea and the other to pyrimidine nucleotides. The large subunit (synthetase) binds the substrates ammonia (free or transferred from glutamine from the small subunit), hydrogencarbonate and ATP and carries out an ATP-coupled ligase reaction, activating hydrogencarbonate by forming carboxy phosphate which reacts with ammonia to form carbamoyl phosphate. The sequence is that of Carbamoyl phosphate synthase large chain from Deinococcus geothermalis (strain DSM 11300 / CIP 105573 / AG-3a).